The chain runs to 1073 residues: Pharyngeal muscle protein 2 (1073 aa).

The region spanning 9 to 43 (INDLRVSELKTELEKRGLSTQGVKVVLTVRLNKAL) is the SAP domain. Disordered stretches follow at residues 59 to 186 (VSPM…PEVV), 207 to 305 (ELKE…SMET), and 337 to 388 (LLED…KSML). Over residues 91 to 111 (EGNDENVLVEEKEEEEEEEDS) the composition is skewed to acidic residues. The segment covering 112-127 (HDLQIIEDHELEVPSD) has biased composition (basic and acidic residues). Residues 128–151 (EKDDTLVEDEEFEEAEQVEPEPEA) show a composition bias toward acidic residues. Basic and acidic residues-rich tracts occupy residues 156 to 182 (VEEKPEEKLEEKPEEKLEEKPEEKPVE) and 207 to 217 (ELKEKPEKEPE). Acidic residues-rich tracts occupy residues 223 to 232 (EPVEQLENEP) and 248 to 265 (QDGEDEFEEDDSSSDIEI). The span at 277 to 293 (AEEKVEKKEKKPEEIPH) shows a compositional bias: basic and acidic residues. The span at 366 to 386 (ASTPQATPSKAASSSAGSGKS) shows a compositional bias: low complexity. The region spanning 396–478 (TSIWIRGMTP…RVLRVEKVSE (83 aa)) is the RRM domain. Disordered stretches follow at residues 481-759 (LTSS…ERRR), 845-917 (QEHR…RNLV), and 1015-1073 (SQNA…RGNY). Composition is skewed to low complexity over residues 496–505 (EAASTMSTSP) and 513–524 (PVVTTTTTTSAA). The segment covering 573 to 587 (ITFDREEESNRDSRR) has biased composition (basic and acidic residues). Positions 588 to 622 (TIAAAPPARTSRMARSPLRAPLRAARGSESSRSST) are enriched in low complexity. The span at 674-689 (VTVQQDAPRASYQTEQ) shows a compositional bias: polar residues. 2 stretches are compositionally biased toward basic and acidic residues: residues 707–727 (VSPDRSEQRRHRDEPPPRRAP) and 742–759 (PPRRQEGARRSEEPERRR). Composition is skewed to low complexity over residues 901–917 (SSSNSNRNSNSGGRNLV), 1015–1026 (SQNAATPSTSTS), and 1034–1060 (QWQQQSYGSNQHQHHQNNNSSQPSSSN).

As to expression, expressed in most tissues including the hypodermal, muscle, neuronal, vulval and intestinal tissues. Isoform a: Expressed in the pharynx, nerve ring, intestine, neurons and ventral nerve cord.

The protein resides in the nucleus. In terms of biological role, involved in pharyngeal muscle development and ensures pharyngeal grinder function during feeding. Plays a role in the defense against the accumulation of ingested live pathogenic bacteria in the intestine. Has a role in the determination of life span. This chain is Pharyngeal muscle protein 2, found in Caenorhabditis elegans.